Here is a 375-residue protein sequence, read N- to C-terminus: E3 ubiquitin-protein ligase IE2 (375 aa).

Residues 1 to 12 show a composition bias toward polar residues; sequence MSRINNADTPTN. Disordered regions lie at residues 1–61 and 115–142; these read MSRI…VGDR and LTTT…DYNS. An RING-type zinc finger spans residues 177 to 225; that stretch reads CHICSCTFTDIKNYNSNFVTSSECNHAVCFKCYVSIVFNKEAYKCSICN. Positions 272–348 form a coiled coil; it reads KTIIEELQLE…TFLQNQLDAQ (77 aa).

The protein belongs to the alphabaculovirus IE2 protein family. In terms of assembly, homooligomer. Post-translationally, auto-ubiquitinated.

It localises to the host nucleus. It carries out the reaction S-ubiquitinyl-[E2 ubiquitin-conjugating enzyme]-L-cysteine + [acceptor protein]-L-lysine = [E2 ubiquitin-conjugating enzyme]-L-cysteine + N(6)-ubiquitinyl-[acceptor protein]-L-lysine.. Functionally, RING-finger E3 ubiquitin ligase that plays an important regulatory role during the initial stages of infection. Migrates to specific nuclear foci early in infection supposely to prepare the sites for viral replication by targeting and ubiquitinating host proteins. This is E3 ubiquitin-protein ligase IE2 (IE2) from Hyphantria cunea nuclear polyhedrosis virus (HcNPV).